Reading from the N-terminus, the 56-residue chain is Large ribosomal subunit protein bL33 (56 aa).

Positions 1–12 (MATKGGRDKIKL) are enriched in basic and acidic residues. Positions 1 to 24 (MATKGGRDKIKLESTAGTGHFYTT) are disordered. Residues 15–24 (TAGTGHFYTT) show a composition bias toward polar residues.

It belongs to the bacterial ribosomal protein bL33 family.

This Paracidovorax citrulli (strain AAC00-1) (Acidovorax citrulli) protein is Large ribosomal subunit protein bL33.